The chain runs to 313 residues: Ribosomal RNA small subunit methyltransferase H (313 aa).

S-adenosyl-L-methionine-binding positions include 35 to 37, D55, F79, D101, and Q108; that span reads GGH.

Belongs to the methyltransferase superfamily. RsmH family.

The protein resides in the cytoplasm. It carries out the reaction cytidine(1402) in 16S rRNA + S-adenosyl-L-methionine = N(4)-methylcytidine(1402) in 16S rRNA + S-adenosyl-L-homocysteine + H(+). Specifically methylates the N4 position of cytidine in position 1402 (C1402) of 16S rRNA. This chain is Ribosomal RNA small subunit methyltransferase H, found in Klebsiella pneumoniae (strain 342).